Here is a 280-residue protein sequence, read N- to C-terminus: ESX-1 secretion-associated protein EspJ (280 aa).

Serine 70 bears the Phosphoserine mark. Low complexity-rich tracts occupy residues 167–181 (QTISQTAQQAAQSAQ) and 246–280 (PAQAMDTGAGARPAASPLAAPVDPSTPAPSTTTTL). The segment at 167 to 280 (QTISQTAQQA…TPAPSTTTTL (114 aa)) is disordered.

Residues 76-280 interact with EsxB and an artificial EsxB-EsxA heterodimer. Phosphorylated at Ser-70.

It localises to the secreted. In terms of biological role, could be involved in regulation of growth and intracellular survival. The protein is ESX-1 secretion-associated protein EspJ of Mycobacterium tuberculosis (strain ATCC 25618 / H37Rv).